The primary structure comprises 425 residues: UPF0761 membrane protein XC_3370 (425 aa).

A run of 6 helical transmembrane segments spans residues 48–68, 105–125, 154–174, 182–202, 216–236, and 250–270; these read VFAL…FPAF, FTVA…HSIE, GTML…LPLF, LAEF…IVLI, ALPG…GFGF, and ALSA…SVLL.

It belongs to the UPF0761 family.

The protein localises to the cell inner membrane. The chain is UPF0761 membrane protein XC_3370 from Xanthomonas campestris pv. campestris (strain 8004).